The sequence spans 286 residues: CDP-diacylglycerol--serine O-phosphatidyltransferase (286 aa).

5 helical membrane-spanning segments follow: residues 15–35, 95–115, 135–155, 167–187, and 207–227; these read ILPS…IKFA, MLSK…CVVL, EFFV…LLAL, VWFL…GIPM, and LAIC…VIII.

This sequence belongs to the CDP-alcohol phosphatidyltransferase class-I family.

It localises to the cell membrane. It catalyses the reaction a CDP-1,2-diacyl-sn-glycerol + L-serine = a 1,2-diacyl-sn-glycero-3-phospho-L-serine + CMP + H(+). This chain is CDP-diacylglycerol--serine O-phosphatidyltransferase (pssA), found in Mycobacterium bovis (strain ATCC BAA-935 / AF2122/97).